The sequence spans 355 residues: S-adenosylmethionine:tRNA ribosyltransferase-isomerase (355 aa).

This sequence belongs to the QueA family. In terms of assembly, monomer.

The protein localises to the cytoplasm. It catalyses the reaction 7-aminomethyl-7-carbaguanosine(34) in tRNA + S-adenosyl-L-methionine = epoxyqueuosine(34) in tRNA + adenine + L-methionine + 2 H(+). It functions in the pathway tRNA modification; tRNA-queuosine biosynthesis. In terms of biological role, transfers and isomerizes the ribose moiety from AdoMet to the 7-aminomethyl group of 7-deazaguanine (preQ1-tRNA) to give epoxyqueuosine (oQ-tRNA). In Burkholderia orbicola (strain MC0-3), this protein is S-adenosylmethionine:tRNA ribosyltransferase-isomerase.